Here is a 434-residue protein sequence, read N- to C-terminus: O-phosphoseryl-tRNA(Sec) selenium transferase (434 aa).

Residues 1–40 form a tetramerization region; it reads MGLNITGLIPKHMENRGKLTLKENLKIIENILEQRKAPEN. Arginine 71 serves as a coordination point for pyridoxal 5'-phosphate. Residues 92–102 are phosphate loop (P-loop); it reads GRSGNLIDPQP. 3 residues coordinate substrate: arginine 93, serine 94, and glutamine 101. Lysine 277 carries the post-translational modification N6-(pyridoxal phosphate)lysine. Arginine 306 contacts substrate.

This sequence belongs to the SepSecS family. Homotetramer. It depends on pyridoxal 5'-phosphate as a cofactor.

The catalysed reaction is O-phospho-L-seryl-tRNA(Sec) + selenophosphate + H2O = L-selenocysteinyl-tRNA(Sec) + 2 phosphate. It functions in the pathway aminoacyl-tRNA biosynthesis; selenocysteinyl-tRNA(Sec) biosynthesis; selenocysteinyl-tRNA(Sec) from L-seryl-tRNA(Sec) (archaeal/eukaryal route): step 2/2. In terms of biological role, converts O-phosphoseryl-tRNA(Sec) to selenocysteinyl-tRNA(Sec) required for selenoprotein biosynthesis. The sequence is that of O-phosphoseryl-tRNA(Sec) selenium transferase (spcS) from Methanocaldococcus jannaschii (strain ATCC 43067 / DSM 2661 / JAL-1 / JCM 10045 / NBRC 100440) (Methanococcus jannaschii).